Reading from the N-terminus, the 98-residue chain is NADH-ubiquinone oxidoreductase chain 4L (98 aa).

3 helical membrane passes run 1 to 21 (MSLV…GLLM), 30 to 50 (LLCL…TILT), and 61 to 81 (IVLL…LVMV).

This sequence belongs to the complex I subunit 4L family. In terms of assembly, core subunit of respiratory chain NADH dehydrogenase (Complex I) which is composed of 45 different subunits.

It localises to the mitochondrion inner membrane. The enzyme catalyses a ubiquinone + NADH + 5 H(+)(in) = a ubiquinol + NAD(+) + 4 H(+)(out). Core subunit of the mitochondrial membrane respiratory chain NADH dehydrogenase (Complex I) which catalyzes electron transfer from NADH through the respiratory chain, using ubiquinone as an electron acceptor. Part of the enzyme membrane arm which is embedded in the lipid bilayer and involved in proton translocation. The sequence is that of NADH-ubiquinone oxidoreductase chain 4L (MT-ND4L) from Crocidura russula (Greater white-toothed shrew).